A 60-amino-acid polypeptide reads, in one-letter code: Protein K12 (60 aa).

The polypeptide is Protein K12 (K12) (Human herpesvirus 8 type P (isolate GK18) (HHV-8)).